The sequence spans 1249 residues: Pleckstrin homology-like domain family B member 2 (1249 aa).

Disordered regions lie at residues 64-85 (QPVS…SPSL) and 128-154 (DHYT…SSRN). 2 positions are modified to phosphoserine: serine 71 and serine 73. The segment covering 74-84 (PMGTSVRSSPS) has biased composition (polar residues). Basic and acidic residues predominate over residues 128–143 (DHYTGRDSERSTRLSE). Serine 156, serine 203, serine 241, and serine 244 each carry phosphoserine. Disordered stretches follow at residues 190–248 (SPIS…LSNM) and 264–289 (NQMS…GEKD). A compositionally biased stretch (polar residues) spans 231–248 (ENVSVRTRKYSGSSLSNM). Residues 267–283 (SPLSLPPRSSLGNSRRG) show a composition bias toward low complexity. A phosphoserine mark is found at serine 329, serine 333, serine 347, serine 380, serine 383, serine 389, serine 411, serine 416, serine 465, serine 486, and serine 510. Residues 388 to 424 (DSDLESLRQSSETPQPVLRERKSSISSISGRDDLMDY) are disordered. Residues threonine 546 and threonine 570 each carry the phosphothreonine modification. Coiled-coil stretches lie at residues 580–692 (TQEL…LDNC) and 718–803 (FEDL…LCNL). The interval 866–934 (VSQPQSSEHF…LGQSNSCGSV (69 aa)) is disordered. The segment covering 873-888 (EHFRSLEERKKQHKEG) has biased composition (basic and acidic residues). At threonine 894 the chain carries Phosphothreonine. Residues 901–919 (TPSLSPHFSSATMGRSTTP) show a composition bias toward polar residues. A coiled-coil region spans residues 1028–1094 (IARIEEMERL…QKLIEKEVKI (67 aa)). Positions 1139-1242 (EKTCRGYLIK…WMDVIVTGAE (104 aa)) constitute a PH domain.

As to quaternary structure, interacts with FLNC. Interacts with AMOTL2; interaction may facilitate PHLDB2 localization to the myotube podosome cortex that surrounds the core. Part of a cortical microtubule stabilization complex (CMSC) composed of KANK1, PPFIA1, PPFIBP1, ERC1/ELKS, PHLDB2/LL5beta, CLASPs, KIF21A and possibly additional interactors; within CMSCs KANK1 and PHLDB2/LL5beta appear to be the core components for targeting of microtubule-binding proteins KIF21A and CLASPs, whereas PPFIA1, PPFIBP1 and ERC1/ELKS serve as scaffolds for protein clustering. As to expression, expressed at postsynaptic membranes of skeletal neuromuscular junctions (at protein level).

Its subcellular location is the cytoplasm. It is found in the membrane. The protein localises to the cell projection. It localises to the podosome. The protein resides in the cell cortex. Functionally, seems to be involved in the assembly of the postsynaptic apparatus. May play a role in acetyl-choline receptor (AChR) aggregation in the postsynaptic membrane. The polypeptide is Pleckstrin homology-like domain family B member 2 (Phldb2) (Mus musculus (Mouse)).